The sequence spans 152 residues: Deoxyuridine 5'-triphosphate nucleotidohydrolase (152 aa).

Residues 71–73 (RSG), Asn84, 88–90 (LID), and Met98 each bind substrate.

It belongs to the dUTPase family. Mg(2+) is required as a cofactor.

The enzyme catalyses dUTP + H2O = dUMP + diphosphate + H(+). The protein operates within pyrimidine metabolism; dUMP biosynthesis; dUMP from dCTP (dUTP route): step 2/2. This enzyme is involved in nucleotide metabolism: it produces dUMP, the immediate precursor of thymidine nucleotides and it decreases the intracellular concentration of dUTP so that uracil cannot be incorporated into DNA. This Salmonella agona (strain SL483) protein is Deoxyuridine 5'-triphosphate nucleotidohydrolase.